The following is a 213-amino-acid chain: MTTNKSYLTYFTDALWINNQPLIAILGICSALAVTTTVTTALTMGFAVSFVTGCSSFVVSLLRKITPESVRMIAQLIIISLFVILIDQFLKAFFFTISKTLSVFVGLIITNCIVMGRAESMARHVSPIPAFLDGLGSGLGYGWVLVCISIIRELFGFGTILGFRVIPEILYTSAAHPDGYENLGLMVLAPSAFFLLGIMIWIVNIIRAPKTKR.

Transmembrane regions (helical) follow at residues 22 to 42 (LIAI…TTAL), 43 to 63 (TMGF…SLLR), 77 to 97 (IIIS…FFTI), 101 to 121 (LSVF…AESM), 131 to 151 (FLDG…ISII), and 183 to 203 (LGLM…IWIV).

Belongs to the NqrDE/RnfAE family. In terms of assembly, composed of six subunits; NqrA, NqrB, NqrC, NqrD, NqrE and NqrF.

The protein resides in the cell inner membrane. The enzyme catalyses a ubiquinone + n Na(+)(in) + NADH + H(+) = a ubiquinol + n Na(+)(out) + NAD(+). Functionally, NQR complex catalyzes the reduction of ubiquinone-1 to ubiquinol by two successive reactions, coupled with the transport of Na(+) ions from the cytoplasm to the periplasm. NqrA to NqrE are probably involved in the second step, the conversion of ubisemiquinone to ubiquinol. This is Na(+)-translocating NADH-quinone reductase subunit D from Chlamydia trachomatis serovar A (strain ATCC VR-571B / DSM 19440 / HAR-13).